The following is a 452-amino-acid chain: Tubulin gamma chain (452 aa).

142–148 lines the GTP pocket; the sequence is AGGTGSG.

This sequence belongs to the tubulin family.

It localises to the cytoplasm. It is found in the cytoskeleton. The protein localises to the microtubule organizing center. Its subcellular location is the centrosome. Functionally, tubulin is the major constituent of microtubules. The gamma chain is found at microtubule organizing centers (MTOC) such as the spindle poles or the centrosome, suggesting that it is involved in the minus-end nucleation of microtubule assembly. This chain is Tubulin gamma chain (G-TUB), found in Plasmodium falciparum (isolate NF54).